The chain runs to 198 residues: DNA damage response protein D (198 aa).

The interval 124–198 (SAAPTDPAGP…SEAGENTPAA (75 aa)) is disordered. Basic and acidic residues predominate over residues 136–180 (PGTDRAERTAAERTASERATHDRASTERPARPRRSAEPEAVRTED).

Appears to contribute to D.radiodurans capacity to survive exposure to ionizing radiation. May play a role in DNA repair and genome reconstitution. In Deinococcus radiodurans (strain ATCC 13939 / DSM 20539 / JCM 16871 / CCUG 27074 / LMG 4051 / NBRC 15346 / NCIMB 9279 / VKM B-1422 / R1), this protein is DNA damage response protein D (ddrD).